The primary structure comprises 385 residues: Arginine biosynthesis bifunctional protein ArgJ (385 aa).

6 residues coordinate substrate: T142, K168, T179, E259, N380, and T385. T179 acts as the Nucleophile in catalysis.

This sequence belongs to the ArgJ family. In terms of assembly, heterotetramer of two alpha and two beta chains.

The protein resides in the cytoplasm. The catalysed reaction is N(2)-acetyl-L-ornithine + L-glutamate = N-acetyl-L-glutamate + L-ornithine. It carries out the reaction L-glutamate + acetyl-CoA = N-acetyl-L-glutamate + CoA + H(+). Its pathway is amino-acid biosynthesis; L-arginine biosynthesis; L-ornithine and N-acetyl-L-glutamate from L-glutamate and N(2)-acetyl-L-ornithine (cyclic): step 1/1. It participates in amino-acid biosynthesis; L-arginine biosynthesis; N(2)-acetyl-L-ornithine from L-glutamate: step 1/4. Its function is as follows. Catalyzes two activities which are involved in the cyclic version of arginine biosynthesis: the synthesis of N-acetylglutamate from glutamate and acetyl-CoA as the acetyl donor, and of ornithine by transacetylation between N(2)-acetylornithine and glutamate. This chain is Arginine biosynthesis bifunctional protein ArgJ, found in Leptospira interrogans serogroup Icterohaemorrhagiae serovar Lai (strain 56601).